Consider the following 734-residue polypeptide: Oligopeptide transporter 2 (734 aa).

The next 14 helical transmembrane spans lie at 44–64 (MWFL…FFGY), 68–88 (PLMI…KLMA), 125–145 (GAGF…IMAF), 152–172 (FLAS…WAGI), 211–231 (FFVI…YLFL), 252–272 (LGSG…SVIA), 283–303 (FFAI…VIPI), 359–379 (FFAI…THVA), 414–434 (WWFY…CIFM), 442–462 (WWGL…VSII), 525–545 (MFLV…SVAW), 596–616 (YPAL…VWLL), 644–664 (ATSV…YFVF), and 677–697 (VLSA…YFSL).

This sequence belongs to the oligopeptide OPT transporter (TC 2.A.67.1) family. In terms of tissue distribution, expressed in flowers, leaves, roots, and stems.

The protein localises to the membrane. In terms of biological role, involved in the translocation of tetra- and pentapeptides across the cellular membrane in an energy-dependent manner. The chain is Oligopeptide transporter 2 (OPT2) from Arabidopsis thaliana (Mouse-ear cress).